The following is a 160-amino-acid chain: uncharacterized protein (160 aa).

Residues 1–31 (METEKPNTDVKVAQDLEKLKLDEKHKDEKKD) are compositionally biased toward basic and acidic residues. The interval 1–160 (METEKPNTDV…DKKDKEHKKE (160 aa)) is disordered. Residues 20-111 (KLDEKHKDEK…KSKLEGKKDK (92 aa)) adopt a coiled-coil conformation. A compositionally biased stretch (basic residues) spans 32-42 (KKDKKDKKDKK). Residues 43–160 (DKKEKTPEEI…DKKDKEHKKE (118 aa)) show a composition bias toward basic and acidic residues.

This is an uncharacterized protein from Dictyostelium discoideum (Social amoeba).